The primary structure comprises 163 residues: Ribosome maturation factor RimP (163 aa).

The protein belongs to the RimP family.

It localises to the cytoplasm. Required for maturation of 30S ribosomal subunits. The sequence is that of Ribosome maturation factor RimP from Polynucleobacter asymbioticus (strain DSM 18221 / CIP 109841 / QLW-P1DMWA-1) (Polynucleobacter necessarius subsp. asymbioticus).